A 254-amino-acid chain; its full sequence is Imidazole glycerol phosphate synthase subunit HisF (254 aa).

Catalysis depends on residues D13 and D132.

This sequence belongs to the HisA/HisF family. In terms of assembly, heterodimer of HisH and HisF.

The protein resides in the cytoplasm. It carries out the reaction 5-[(5-phospho-1-deoxy-D-ribulos-1-ylimino)methylamino]-1-(5-phospho-beta-D-ribosyl)imidazole-4-carboxamide + L-glutamine = D-erythro-1-(imidazol-4-yl)glycerol 3-phosphate + 5-amino-1-(5-phospho-beta-D-ribosyl)imidazole-4-carboxamide + L-glutamate + H(+). Its pathway is amino-acid biosynthesis; L-histidine biosynthesis; L-histidine from 5-phospho-alpha-D-ribose 1-diphosphate: step 5/9. Functionally, IGPS catalyzes the conversion of PRFAR and glutamine to IGP, AICAR and glutamate. The HisF subunit catalyzes the cyclization activity that produces IGP and AICAR from PRFAR using the ammonia provided by the HisH subunit. This chain is Imidazole glycerol phosphate synthase subunit HisF, found in Wolinella succinogenes (strain ATCC 29543 / DSM 1740 / CCUG 13145 / JCM 31913 / LMG 7466 / NCTC 11488 / FDC 602W) (Vibrio succinogenes).